Reading from the N-terminus, the 450-residue chain is Phosphoglucosamine mutase (450 aa).

Ser-101 serves as the catalytic Phosphoserine intermediate. Residues Ser-101, Asp-240, Asp-242, and Asp-244 each coordinate Mg(2+). The residue at position 101 (Ser-101) is a Phosphoserine.

This sequence belongs to the phosphohexose mutase family. Mg(2+) is required as a cofactor. In terms of processing, activated by phosphorylation.

It carries out the reaction alpha-D-glucosamine 1-phosphate = D-glucosamine 6-phosphate. Catalyzes the conversion of glucosamine-6-phosphate to glucosamine-1-phosphate. This Streptococcus pneumoniae serotype 4 (strain ATCC BAA-334 / TIGR4) protein is Phosphoglucosamine mutase.